The sequence spans 1838 residues: Collagen alpha-1(V) chain (1838 aa).

Positions 1–36 (MDVHTRWKAARPGALLLSSPLLLFLLLLWAPPSSRA) are cleaved as a signal peptide. Residues 72–244 (DVAYRVSKDA…DYCEHYSPDC (173 aa)) form the Laminin G-like domain. The tract at residues 231-443 (RAAYDYCEHY…MPANQDTIFE (213 aa)) is nonhelical region. Sulfotyrosine is present on residues Tyr-234, Tyr-236, Tyr-240, Tyr-262, and Tyr-263. 2 disordered regions span residues 242–545 (PDCD…QESQ) and 559–1574 (GPAG…EVIQ). The segment covering 258 to 268 (NPDEYYPEGEG) has biased composition (acidic residues). 4 stretches are compositionally biased toward low complexity: residues 335–345 (DYDYVPPDDYY), 374–387 (VPTS…TSNP), 413–428 (YDPY…VSPS), and 460–469 (IIEPGMLIEG). Residues 444–558 (GIGGPRGEKG…ILQQARLALR (115 aa)) form an interrupted collagenous region region. The segment covering 470–485 (PPGPEGPAGLPGPPGT) has biased composition (pro residues). 2 stretches are compositionally biased toward low complexity: residues 506 to 523 (LPGA…LMLP) and 559 to 570 (GPAGPMGLTGRP). Residues 559-1570 (GPAGPMGLTG…GLPGPPGPPG (1012 aa)) form a triple-helical region region. A 4-hydroxyproline mark is found at Pro-570, Pro-576, and Pro-621. Position 627 is a 5-hydroxylysine (Lys-627). Pro-639 is modified (4-hydroxyproline). A 5-hydroxylysine modification is found at Lys-642. 5 positions are modified to 4-hydroxyproline: Pro-648, Pro-654, Pro-657, Pro-675, and Pro-678. Residues 671-686 (PRGLPGEPGPRGLLGP) are compositionally biased toward low complexity. 3-hydroxyproline is present on residues Pro-680 and Pro-686. Pro residues predominate over residues 687–696 (KGPPGPPGPP). 3 positions are modified to 4-hydroxyproline: Pro-690, Pro-696, and Pro-705. Residue Lys-708 is modified to 5-hydroxylysine. 4-hydroxyproline is present on residues Pro-717, Pro-720, Pro-726, and Pro-732. Positions 722-741 (QQGNPGAQGLPGPQGAIGPP) are enriched in low complexity. Lys-744 carries the 5-hydroxylysine modification. Residues 747-756 (LGKPGLPGMP) show a composition bias toward low complexity. 4-hydroxyproline occurs at positions 750, 756, 762, 765, and 771. Lys-774 carries the post-translational modification 5-hydroxylysine. 4-hydroxyproline occurs at positions 780 and 789. 5-hydroxylysine occurs at positions 795, 804, 807, and 810. Pro-816 bears the 4-hydroxyproline mark. At Lys-819 the chain carries 5-hydroxylysine. Residue Pro-834 is modified to 4-hydroxyproline. The span at 837-846 (RGEDGPEGPK) shows a compositional bias: basic and acidic residues. Residues Lys-846 and Lys-864 each carry the 5-hydroxylysine modification. A 4-hydroxyproline mark is found at Pro-870, Pro-873, and Pro-876. 5-hydroxylysine is present on Lys-882. A 4-hydroxyproline mark is found at Pro-888 and Pro-891. Position 897 is a 5-hydroxylysine (Lys-897). Pro-903 and Pro-906 each carry 4-hydroxyproline. A compositionally biased stretch (low complexity) spans 908 to 917 (PRGQRGPTGP). Pro-930 and Pro-945 each carry 4-hydroxyproline. 2 stretches are compositionally biased toward low complexity: residues 971–990 (KDGL…QGKT) and 999–1011 (VGPQ…TGPM). Residues Pro-1017, Pro-1020, Pro-1023, and Pro-1029 each carry the 4-hydroxyproline modification. Residues 1088 to 1104 (SPGERGPAGAAGPIGIP) are compositionally biased toward low complexity. The span at 1106–1115 (RPGPQGPPGP) shows a compositional bias: pro residues. 2 positions are modified to 4-hydroxyproline: Pro-1221 and Pro-1224. Residues 1259-1268 (PSGAPGADGP) show a composition bias toward low complexity. Residues 1294–1303 (GLPGEGGPLG) are compositionally biased toward gly residues. Composition is skewed to pro residues over residues 1380–1398 (TGEP…PGPA) and 1454–1469 (SPGP…PPGL). Residues Pro-1467 and Pro-1470 each carry the 4-hydroxyproline modification. Residues 1485 to 1494 (PGLIGLIGPP) are compositionally biased toward low complexity. Over residues 1526 to 1541 (PLGPPGPPGLPGPPGP) the composition is skewed to pro residues. A compositionally biased stretch (low complexity) spans 1542–1554 (KGAKGSSGPTGPK). Residues 1571-1605 (EVIQPLPIQASRTRRNIDASQLLDDGAGESYVDYA) form a nonhelical region region. Sulfotyrosine is present on residues Tyr-1601 and Tyr-1604. Residues 1609–1837 (EEIFGSLNSL…GFEVGPACFL (229 aa)) form the Fibrillar collagen NC1 domain.

This sequence belongs to the fibrillar collagen family. Trimers of two alpha 1(V) and one alpha 2(V) chains in most tissues and trimers of one alpha 1(V), one alpha 2(V), and one alpha 3(V) chains in placenta. Interacts with CSPG4. In terms of processing, hydroxylation on proline residues within the sequence motif, GXPG, is most likely to be 4-hydroxy as this fits the requirement for 4-hydroxylation in vertebrates. Post-translationally, sulfated on 40% of tyrosines. As to expression, widely expressed. Isoform 2 is more highly expressed in liver, kidney and lung.

It is found in the secreted. The protein localises to the extracellular space. Its subcellular location is the extracellular matrix. Its function is as follows. Type V collagen is a member of group I collagen (fibrillar forming collagen). It is a minor connective tissue component of nearly ubiquitous distribution. Type V collagen binds to DNA, heparan sulfate, thrombospondin, heparin, and insulin. Transcriptionally activated by CEBPZ, which recognizes a CCAAT-like motif, CAAAT in the COL5A1 promoter. This Mus musculus (Mouse) protein is Collagen alpha-1(V) chain (Col5a1).